The sequence spans 305 residues: Methionyl-tRNA formyltransferase (305 aa).

Serine 111 to proline 114 lines the (6S)-5,6,7,8-tetrahydrofolate pocket.

Belongs to the Fmt family.

It catalyses the reaction L-methionyl-tRNA(fMet) + (6R)-10-formyltetrahydrofolate = N-formyl-L-methionyl-tRNA(fMet) + (6S)-5,6,7,8-tetrahydrofolate + H(+). Attaches a formyl group to the free amino group of methionyl-tRNA(fMet). The formyl group appears to play a dual role in the initiator identity of N-formylmethionyl-tRNA by promoting its recognition by IF2 and preventing the misappropriation of this tRNA by the elongation apparatus. This Campylobacter jejuni subsp. doylei (strain ATCC BAA-1458 / RM4099 / 269.97) protein is Methionyl-tRNA formyltransferase.